The following is a 222-amino-acid chain: Formimidoylglutamase (222 aa).

Residues histidine 34, aspartate 59, histidine 61, aspartate 63, aspartate 150, and aspartate 152 each coordinate Mn(2+).

This sequence belongs to the arginase family. The cofactor is Mn(2+).

The enzyme catalyses N-formimidoyl-L-glutamate + H2O = formamide + L-glutamate. Its pathway is amino-acid degradation; L-histidine degradation into L-glutamate; L-glutamate from N-formimidoyl-L-glutamate (hydrolase route): step 1/1. Functionally, catalyzes the conversion of N-formimidoyl-L-glutamate to L-glutamate and formamide. The protein is Formimidoylglutamase (hutG) of Klebsiella aerogenes (Enterobacter aerogenes).